A 188-amino-acid chain; its full sequence is Ribosome-recycling factor (188 aa).

This sequence belongs to the RRF family.

It is found in the cytoplasm. In terms of biological role, responsible for the release of ribosomes from messenger RNA at the termination of protein biosynthesis. May increase the efficiency of translation by recycling ribosomes from one round of translation to another. The sequence is that of Ribosome-recycling factor from Blochmanniella floridana.